The sequence spans 674 residues: Primary amine oxidase (674 aa).

The signal sequence occupies residues 1-25 (MASTTTMRLALFSVLTLLSFHAVVS). An N-linked (GlcNAc...) asparagine glycan is attached at N156. Cysteines 162 and 183 form a disulfide. The segment covering 226 to 236 (ENTEYQVSKQS) has biased composition (polar residues). Residues 226–251 (ENTEYQVSKQSPPFGPKQHSLTSHQP) are disordered. A substrate-binding site is contributed by 323 to 334 (FFDSGEFGFGLS). D325 (proton acceptor) is an active-site residue. An intrachain disulfide couples C344 to C370. N389 carries N-linked (GlcNAc...) asparagine glycosylation. 409–414 (VGNYDN) serves as a coordination point for substrate. The active-site Schiff-base intermediate with substrate; via topaquinone is the Y412. A 2',4',5'-topaquinone modification is found at Y412. Positions 467 and 469 each coordinate Cu cation. Mn(2+) is bound by residues D476, F477, D478, D617, and I618. H628 serves as a coordination point for Cu cation.

Belongs to the copper/topaquinone oxidase family. In terms of assembly, homodimer. Cu cation is required as a cofactor. The cofactor is Mn(2+). It depends on L-topaquinone as a cofactor. Topaquinone (TPQ) is generated by copper-dependent autoxidation of a specific tyrosyl residue.

The catalysed reaction is a primary methyl amine + O2 + H2O = an aldehyde + H2O2 + NH4(+). In Pisum sativum (Garden pea), this protein is Primary amine oxidase.